Here is a 370-residue protein sequence, read N- to C-terminus: Protein Wnt-1 (370 aa).

The N-terminal stretch at 1-19 is a signal peptide; it reads MRVLALLLAVKAACVLLVS. N-linked (GlcNAc...) asparagine glycosylation occurs at Asn-28. 5 disulfides stabilise this stretch: Cys-92–Cys-103, Cys-142–Cys-150, Cys-152–Cys-169, Cys-217–Cys-231, and Cys-219–Cys-226. A lipid anchor (O-palmitoleoyl serine; by PORCN) is attached at Ser-223. The segment at 261–282 is disordered; that stretch reads GSNRASHRADPRHLEPENPAHK. Positions 267-280 are enriched in basic and acidic residues; sequence HRADPRHLEPENPA. Cystine bridges form between Cys-299–Cys-330, Cys-315–Cys-325, Cys-329–Cys-369, Cys-345–Cys-360, Cys-347–Cys-357, and Cys-352–Cys-353. N-linked (GlcNAc...) asparagine glycosylation is present at Asn-316. Residue Asn-359 is glycosylated (N-linked (GlcNAc...) asparagine).

The protein belongs to the Wnt family. Post-translationally, palmitoleoylation is required for efficient binding to frizzled receptors. Palmitoleoylation is necessary for proper trafficking to cell surface. Depalmitoleoylated by NOTUM, leading to inhibit Wnt signaling pathway.

Its subcellular location is the secreted. It localises to the extracellular space. The protein localises to the extracellular matrix. Its function is as follows. Ligand for members of the frizzled family of seven transmembrane receptors. Acts in the canonical Wnt signaling pathway by promoting beta-catenin-dependent transcriptional activation. Involved in neurogenesis. Performs a partially redundant function with wnt10b in the formation of the midbrain-hindbrain boundary (MHB) organizer. In the hindbrain, mediates lateral inhibition of boundary cell specification, probably via up-regulation of proneural and Delta gene expression in non-boundary cells; localized expression of wnt1 in boundary cells is maintained via rfng-mediated modulation of Notch activity. The sequence is that of Protein Wnt-1 (wnt1) from Danio rerio (Zebrafish).